We begin with the raw amino-acid sequence, 116 residues long: Tyrosine-protein phosphatase 20 (116 aa).

The 116-residue stretch at 1-116 folds into the Tyrosine-protein phosphatase domain; it reads WMMIVEQKCR…EIGGDAPMVV (116 aa). D84 contributes to the substrate binding site.

It belongs to the protein-tyrosine phosphatase family.

The enzyme catalyses O-phospho-L-tyrosyl-[protein] + H2O = L-tyrosyl-[protein] + phosphate. The protein is Tyrosine-protein phosphatase 20 (STY-20) of Styela plicata (Wrinkled sea squirt).